A 149-amino-acid chain; its full sequence is UPF0310 protein msl3206 (149 aa).

This sequence belongs to the UPF0310 family.

The polypeptide is UPF0310 protein msl3206 (Mesorhizobium japonicum (strain LMG 29417 / CECT 9101 / MAFF 303099) (Mesorhizobium loti (strain MAFF 303099))).